The primary structure comprises 213 residues: Probable nicotinate-nucleotide adenylyltransferase (213 aa).

Positions 194–213 (RKPNNGEAKDGDVKDEEAVR) are disordered. Positions 200–213 (EAKDGDVKDEEAVR) are enriched in basic and acidic residues.

It belongs to the NadD family.

It catalyses the reaction nicotinate beta-D-ribonucleotide + ATP + H(+) = deamido-NAD(+) + diphosphate. The protein operates within cofactor biosynthesis; NAD(+) biosynthesis; deamido-NAD(+) from nicotinate D-ribonucleotide: step 1/1. In terms of biological role, catalyzes the reversible adenylation of nicotinate mononucleotide (NaMN) to nicotinic acid adenine dinucleotide (NaAD). This is Probable nicotinate-nucleotide adenylyltransferase from Mycolicibacterium smegmatis (strain ATCC 700084 / mc(2)155) (Mycobacterium smegmatis).